The sequence spans 82 residues: MRLVVCLVFLASFALVCQGQVYKGGYTRPIPRPPPFVRPLPGGPIGPYNGCPISCRGISFSQARSYCSRLGRCCHVGKGYSG.

An N-terminal signal peptide occupies residues 1 to 19 (MRLVVCLVFLASFALVCQG). A Pyrrolidone carboxylic acid modification is found at Gln-20. Intrachain disulfides connect Cys-55-Cys-73 and Cys-67-Cys-74. Residue Ser-81 is modified to Serine amide.

The protein belongs to the penaeidin family.

The protein localises to the cytoplasmic granule. Antibacterial and antifungal activity. Presents chitin-binding activity. The protein is Penaeidin-3h of Penaeus vannamei (Whiteleg shrimp).